The chain runs to 566 residues: Berberine bridge enzyme-like D-2 (566 aa).

An N-terminal signal peptide occupies residues 1 to 33 (MKRNISMSLQRLLIILMMISFLFTSLLVPSVSA). Cysteine 42 and cysteine 103 are oxidised to a cystine. Asparagine 50 carries an N-linked (GlcNAc...) asparagine glycan. Residues 81–257 (SKPKPTVIIV…YAWKIRLLKV (177 aa)) form the FAD-binding PCMH-type domain. Histidine 118 is modified (pros-8alpha-FAD histidine). Asparagine 364, asparagine 378, and asparagine 503 each carry an N-linked (GlcNAc...) asparagine glycan.

It belongs to the oxygen-dependent FAD-linked oxidoreductase family. FAD is required as a cofactor.

The protein localises to the vacuole. The protein operates within alkaloid biosynthesis; nicotine biosynthesis. Involved in the biosynthesis of pyridine alkaloid natural products, leading mainly to the production of anabasine, anatabine, nicotine and nornicotine, effective deterrents against herbivores with antiparasitic and pesticide properties (neurotoxins); nornicotine serves as the precursor in the synthesis of the carcinogen compound N'-nitrosonornicotine (NNN). Catalyzes a late oxidation step subsequent to the pyridine ring condensation reaction in the biosynthesis of alkaloids. The polypeptide is Berberine bridge enzyme-like D-2 (Nicotiana tabacum (Common tobacco)).